The chain runs to 122 residues: MARLAGVDIPREKRVIIALTYIYGVGKTRAEETLAATGIDPNIRVKDLSAEQLVQLRDHIEGSYKVEGDLRREVAADIRRKVEIGSYEGLRHRRGLPVRGQRTKTNARTRKGPKKTVAGKKK.

The disordered stretch occupies residues 93 to 122 (RRGLPVRGQRTKTNARTRKGPKKTVAGKKK).

The protein belongs to the universal ribosomal protein uS13 family. Part of the 30S ribosomal subunit. Forms a loose heterodimer with protein S19. Forms two bridges to the 50S subunit in the 70S ribosome.

In terms of biological role, located at the top of the head of the 30S subunit, it contacts several helices of the 16S rRNA. In the 70S ribosome it contacts the 23S rRNA (bridge B1a) and protein L5 of the 50S subunit (bridge B1b), connecting the 2 subunits; these bridges are implicated in subunit movement. Contacts the tRNAs in the A and P-sites. In Micrococcus luteus (strain ATCC 4698 / DSM 20030 / JCM 1464 / CCM 169 / CCUG 5858 / IAM 1056 / NBRC 3333 / NCIMB 9278 / NCTC 2665 / VKM Ac-2230) (Micrococcus lysodeikticus), this protein is Small ribosomal subunit protein uS13.